The sequence spans 254 residues: Decaprenylphosphoryl-2-keto-beta-D-erythro-pentose reductase (254 aa).

Residue Asp-67 coordinates NAD(+). Tyr-160 (proton acceptor) is an active-site residue. Residue Lys-164 participates in NAD(+) binding.

It belongs to the short-chain dehydrogenases/reductases (SDR) family. As to quaternary structure, interacts with DprE1 to form an epimerase complex.

The protein resides in the periplasm. It carries out the reaction trans,octa-cis-decaprenylphospho-beta-D-arabinofuranose + NAD(+) = trans,octa-cis-decaprenylphospho-beta-D-erythro-pentofuranosid-2-ulose + NADH + H(+). It participates in cell wall biogenesis; cell wall polysaccharide biosynthesis. Functionally, component of the DprE1-DprE2 complex that catalyzes the 2-step epimerization of decaprenyl-phospho-ribose (DPR) to decaprenyl-phospho-arabinose (DPA), a key precursor that serves as the arabinose donor required for the synthesis of cell-wall arabinans. DprE1 catalyzes the first step of epimerization, namely FAD-dependent oxidation of the C2' hydroxyl of DPR to yield the keto intermediate decaprenyl-phospho-2'-keto-D-arabinose (DPX). The intermediate DPX is then transferred to DprE2 subunit of the epimerase complex, most probably through a 'substrate channel' at the interface of DprE1-DprE2 complex. DprE2 then catalyzes the second step of epimerization, the NAD(+)-dependent reduction of DPX that leads to the formation of DPA. This is Decaprenylphosphoryl-2-keto-beta-D-erythro-pentose reductase from Mycolicibacterium smegmatis (strain ATCC 700084 / mc(2)155) (Mycobacterium smegmatis).